We begin with the raw amino-acid sequence, 459 residues long: Elongation factor 1-alpha (459 aa).

Gly-2 is modified (n,N,N-trimethylglycine). N6,N6-dimethyllysine; alternate is present on Lys-3. Position 3 is an N6-methyllysine; alternate (Lys-3). The region spanning Lys-5 to Ser-240 is the tr-type G domain. A G1 region spans residues Gly-14–Ser-21. Gly-14–Ser-21 is a GTP binding site. Lys-30 is modified (N6-methyllysine). A G2 region spans residues Val-70–Asp-74. Position 79 is an N6,N6,N6-trimethyllysine (Lys-79). The segment at Asp-91–Gly-94 is G3. GTP contacts are provided by residues Asp-91–His-95 and Asn-153–Asp-156. Positions Asn-153–Asp-156 are G4. Residues Ser-192–Trp-194 form a G5 region. Lys-316 bears the N6,N6-dimethyllysine; alternate mark. Residue Lys-316 is modified to N6-methyllysine; alternate. The residue at position 390 (Lys-390) is an N6-methyllysine.

Belongs to the TRAFAC class translation factor GTPase superfamily. Classic translation factor GTPase family. EF-Tu/EF-1A subfamily.

Its subcellular location is the cytoplasm. Functionally, this protein promotes the GTP-dependent binding of aminoacyl-tRNA to the A-site of ribosomes during protein biosynthesis. This Blastobotrys adeninivorans (Yeast) protein is Elongation factor 1-alpha (TEF).